The following is a 147-amino-acid chain: Cytochrome b-c1 complex subunit 6, mitochondrial (147 aa).

The disordered stretch occupies residues 25 to 89 (AEDDDNEQHE…DLREHFKNTE (65 aa)). A compositionally biased stretch (acidic residues) spans 41-78 (EEKEEENGDEDEDEDEDEDDDDDDDEDEEEEEEVTDQL). The segment covering 79–89 (EDLREHFKNTE) has biased composition (basic and acidic residues). Cys-101 and Cys-123 form a disulfide bridge.

The protein belongs to the UQCRH/QCR6 family. In terms of assembly, component of the ubiquinol-cytochrome c oxidoreductase (cytochrome b-c1 complex, complex III, CIII), a multisubunit enzyme composed of 10 subunits. The complex is composed of 3 respiratory subunits cytochrome b (COB), cytochrome c1 (CYT1) and Rieske protein (RIP1), 2 core protein subunits COR1 and QCR2, and 5 low-molecular weight protein subunits QCR6, QCR7, QCR8, QCR9 and QCR10. The complex exists as an obligatory dimer and forms supercomplexes (SCs) in the inner mitochondrial membrane with a monomer or a dimer of cytochrome c oxidase (complex IV, CIV), resulting in 2 different assemblies (supercomplexes III(2)IV and III(2)IV(2)). QCR6 interacts with COX5A at the CIII-CIV interface.

It localises to the mitochondrion inner membrane. In terms of biological role, component of the ubiquinol-cytochrome c oxidoreductase, a multisubunit transmembrane complex that is part of the mitochondrial electron transport chain which drives oxidative phosphorylation. The respiratory chain contains 3 multisubunit complexes succinate dehydrogenase (complex II, CII), ubiquinol-cytochrome c oxidoreductase (cytochrome b-c1 complex, complex III, CIII) and cytochrome c oxidase (complex IV, CIV), that cooperate to transfer electrons derived from NADH and succinate to molecular oxygen, creating an electrochemical gradient over the inner membrane that drives transmembrane transport and the ATP synthase. The cytochrome b-c1 complex catalyzes electron transfer from ubiquinol to cytochrome c, linking this redox reaction to translocation of protons across the mitochondrial inner membrane, with protons being carried across the membrane as hydrogens on the quinol. In the process called Q cycle, 2 protons are consumed from the matrix, 4 protons are released into the intermembrane space and 2 electrons are passed to cytochrome c. This chain is Cytochrome b-c1 complex subunit 6, mitochondrial (QCR6), found in Saccharomyces cerevisiae (strain ATCC 204508 / S288c) (Baker's yeast).